The following is a 99-amino-acid chain: A-type ATP synthase subunit F (99 aa).

This sequence belongs to the V-ATPase F subunit family. Has multiple subunits with at least A(3), B(3), C, D, E, F, H, I and proteolipid K(x).

The protein resides in the cell membrane. Component of the A-type ATP synthase that produces ATP from ADP in the presence of a proton gradient across the membrane. The chain is A-type ATP synthase subunit F from Methanococcus maripaludis (strain C7 / ATCC BAA-1331).